Here is a 281-residue protein sequence, read N- to C-terminus: Nucleotide-binding protein Tpet_1006 (281 aa).

9 to 16 (GLSGAGKT) provides a ligand contact to ATP. 58–61 (DVRS) is a GTP binding site.

Belongs to the RapZ-like family.

Displays ATPase and GTPase activities. The protein is Nucleotide-binding protein Tpet_1006 of Thermotoga petrophila (strain ATCC BAA-488 / DSM 13995 / JCM 10881 / RKU-1).